Here is a 285-residue protein sequence, read N- to C-terminus: Acrosomal protein SP-10 (285 aa).

A signal peptide spans 1-21; it reads MNMFLLLMSLYLLGSARGTSG. The tract at residues 64 to 200 is disordered; the sequence is TLSEHGSSEH…GEQPSGAPIS (137 aa). A run of 19 repeats spans residues 66–70, 71–75, 85–89, 91–95, 110–114, 115–119, 120–124, 125–129, 130–134, 135–139, 145–149, 150–154, 155–159, 160–164, 165–169, 170–174, 175–179, 180–184, and 190–194. A 3 X 5 AA repeats of S-E-H-[GA]-A region spans residues 66-95; sequence SEHGSSEHGSREHTVAEHTPGEHAESEHAS. The segment covering 69–95 has biased composition (basic and acidic residues); it reads GSSEHGSREHTVAEHTPGEHAESEHAS. Positions 85–184 are 7 X 5 AA repeats of S-G-E-H-[AL]; sequence PGEHAESEHA…SGEQSLGEHA (100 aa). Positions 110 to 194 are 9 X 5 AA repeats of [SV]-G-E-Q-[PSA]; the sequence is VGEQPSGEQP…LSEKPSGEQP (85 aa). The N-linked (GlcNAc...) asparagine glycan is linked to asparagine 278.

As to expression, testis.

It is found in the cytoplasmic vesicle. The protein localises to the secretory vesicle. The protein resides in the acrosome. In Papio hamadryas (Hamadryas baboon), this protein is Acrosomal protein SP-10 (ACRV1).